Reading from the N-terminus, the 168-residue chain is G/U mismatch-specific DNA glycosylase (168 aa).

This sequence belongs to the uracil-DNA glycosylase (UDG) superfamily. TDG/mug family. Binds DNA as a monomer.

The protein resides in the cytoplasm. It carries out the reaction Specifically hydrolyzes mismatched double-stranded DNA and polynucleotides, releasing free uracil.. Its function is as follows. Excises ethenocytosine and uracil, which can arise by alkylation or deamination of cytosine, respectively, from the corresponding mispairs with guanine in ds-DNA. It is capable of hydrolyzing the carbon-nitrogen bond between the sugar-phosphate backbone of the DNA and the mispaired base. The complementary strand guanine functions in substrate recognition. Required for DNA damage lesion repair in stationary-phase cells. The chain is G/U mismatch-specific DNA glycosylase from Salmonella agona (strain SL483).